The chain runs to 121 residues: Ribonuclease P protein component (121 aa).

This sequence belongs to the RnpA family. Consists of a catalytic RNA component (M1 or rnpB) and a protein subunit.

It carries out the reaction Endonucleolytic cleavage of RNA, removing 5'-extranucleotides from tRNA precursor.. Functionally, RNaseP catalyzes the removal of the 5'-leader sequence from pre-tRNA to produce the mature 5'-terminus. It can also cleave other RNA substrates such as 4.5S RNA. The protein component plays an auxiliary but essential role in vivo by binding to the 5'-leader sequence and broadening the substrate specificity of the ribozyme. The protein is Ribonuclease P protein component of Geobacillus thermodenitrificans (strain NG80-2).